A 397-amino-acid polypeptide reads, in one-letter code: Elongation factor Tu (397 aa).

The region spanning 10-207 (KPHVNIGTLG…AVDNNIPDPV (198 aa)) is the tr-type G domain. The G1 stretch occupies residues 19 to 26 (GHVDHGKT). A GTP-binding site is contributed by 19-26 (GHVDHGKT). Thr-26 contributes to the Mg(2+) binding site. The tract at residues 63-67 (GITIN) is G2. The segment at 84-87 (DAPG) is G3. Residues 84 to 88 (DAPGH) and 139 to 142 (NKSD) each bind GTP. Positions 139-142 (NKSD) are G4. The tract at residues 177-179 (SGL) is G5.

The protein belongs to the TRAFAC class translation factor GTPase superfamily. Classic translation factor GTPase family. EF-Tu/EF-1A subfamily. Monomer.

The protein resides in the cytoplasm. The catalysed reaction is GTP + H2O = GDP + phosphate + H(+). In terms of biological role, GTP hydrolase that promotes the GTP-dependent binding of aminoacyl-tRNA to the A-site of ribosomes during protein biosynthesis. The chain is Elongation factor Tu from Leifsonia xyli subsp. xyli (strain CTCB07).